The primary structure comprises 881 residues: Translation initiation factor IF-2 (881 aa).

Disordered regions lie at residues 31-147 (KLAQ…TKVP) and 165-291 (SVVG…HYDE). Positions 42–55 (NSSEKPSAKVAEKV) are enriched in basic and acidic residues. Polar residues predominate over residues 68–77 (ATPESVSSET). The segment covering 114–128 (VEEEIASSTDSEPEV) has biased composition (acidic residues). Over residues 191-203 (PKKEDKPAPKERS) the composition is skewed to basic and acidic residues. Positions 204–233 (GQAQAKPQQSSEASSENKPHSPNNNRSSQP) are enriched in polar residues. The segment covering 235 to 267 (YRRDTSKKPGSDFRDRAKKDDNPKAFTGRDRYG) has biased composition (basic and acidic residues). Over residues 278 to 287 (RKKRVQKTKK) the composition is skewed to basic residues. The region spanning 387 to 556 (IRPPIVAFMG…ALQAEVLELK (170 aa)) is the tr-type G domain. A G1 region spans residues 396–403 (GHVDHGKT). Residue 396–403 (GHVDHGKT) coordinates GTP. A G2 region spans residues 421 to 425 (AITQH). The segment at 442–445 (DTPG) is G3. GTP-binding positions include 442–446 (DTPGH) and 496–499 (NKCD). Residues 496–499 (NKCD) are G4. The segment at 532-534 (SAK) is G5.

Belongs to the TRAFAC class translation factor GTPase superfamily. Classic translation factor GTPase family. IF-2 subfamily.

The protein resides in the cytoplasm. Its function is as follows. One of the essential components for the initiation of protein synthesis. Protects formylmethionyl-tRNA from spontaneous hydrolysis and promotes its binding to the 30S ribosomal subunits. Also involved in the hydrolysis of GTP during the formation of the 70S ribosomal complex. The chain is Translation initiation factor IF-2 from Chlamydia felis (strain Fe/C-56) (Chlamydophila felis).